A 152-amino-acid chain; its full sequence is MYRMQLLSCIALTLALVANGAPTSSSTENTKKQVQSLLQDLQLLLKEINNYENLKLFRMLTFKFYMPKKATELKHLQCLAEELKPLEDVLNVAQSKTQNSIDIKDLMDNINRIVLTLKGSETRFTCEYDEKTVTAVELLNKWITFCQSIIST.

A signal peptide spans 1-20; the sequence is MYRMQLLSCIALTLALVANG. Thr-23 carries O-linked (GalNAc...) threonine glycosylation. An intrachain disulfide couples Cys-78 to Cys-126.

The protein belongs to the IL-2 family.

The protein localises to the secreted. In terms of biological role, cytokine produced by activated CD4-positive helper T-cells and to a lesser extend activated CD8-positive T-cells and natural killer (NK) cells that plays pivotal roles in the immune response and tolerance. Binds to a receptor complex composed of either the high-affinity trimeric IL-2R (IL2RA/CD25, IL2RB/CD122 and IL2RG/CD132) or the low-affinity dimeric IL-2R (IL2RB and IL2RG). Interaction with the receptor leads to oligomerization and conformation changes in the IL-2R subunits resulting in downstream signaling starting with phosphorylation of JAK1 and JAK3. In turn, JAK1 and JAK3 phosphorylate the receptor to form a docking site leading to the phosphorylation of several substrates including STAT5. This process leads to activation of several pathways including STAT, phosphoinositide-3-kinase/PI3K and mitogen-activated protein kinase/MAPK pathways. Functions as a T-cell growth factor and can increase NK-cell cytolytic activity as well. Promotes strong proliferation of activated B-cells and subsequently immunoglobulin production. Plays a pivotal role in regulating the adaptive immune system by controlling the survival and proliferation of regulatory T-cells, which are required for the maintenance of immune tolerance. Moreover, participates in the differentiation and homeostasis of effector T-cell subsets, including Th1, Th2, Th17 as well as memory CD8-positive T-cells. The sequence is that of Interleukin-2 (IL2) from Orcinus orca (Killer whale).